The chain runs to 660 residues: Putative ABC transporter ATP-binding MG390 (660 aa).

In terms of domain architecture, Peptidase C39 spans 6-126; the sequence is QEQQNECGIC…KLWTGYAATV (121 aa). C12 is an active-site residue. The next 6 helical transmembrane spans lie at 150–170, 188–208, 265–285, 290–310, 379–399, and 402–422; these read LVTF…LLAT, LVVL…LQVI, YIPN…LIGI, FLLI…YDFF, SFFQ…GIIE, and YQLS…TYAT. The region spanning 464–657 is the ABC transporter domain; the sequence is ISLENLSVTL…QNKINLTNYL (194 aa). 494–501 contributes to the ATP binding site; the sequence is GQNGSGKS.

It belongs to the ABC transporter superfamily.

The protein localises to the cell membrane. This Mycoplasma genitalium (strain ATCC 33530 / DSM 19775 / NCTC 10195 / G37) (Mycoplasmoides genitalium) protein is Putative ABC transporter ATP-binding MG390.